We begin with the raw amino-acid sequence, 233 residues long: Ribonuclease 3 (233 aa).

The RNase III domain maps to L4–G126. Position 39 (E39) interacts with Mg(2+). Residue D43 is part of the active site. Mg(2+)-binding residues include D112 and E115. E115 is a catalytic residue. The 70-residue stretch at D153 to D222 folds into the DRBM domain.

Belongs to the ribonuclease III family. As to quaternary structure, homodimer. Mg(2+) serves as cofactor.

The protein resides in the cytoplasm. The enzyme catalyses Endonucleolytic cleavage to 5'-phosphomonoester.. In terms of biological role, digests double-stranded RNA. Involved in the processing of primary rRNA transcript to yield the immediate precursors to the large and small rRNAs (23S and 16S). Processes some mRNAs, and tRNAs when they are encoded in the rRNA operon. Processes pre-crRNA and tracrRNA of type II CRISPR loci if present in the organism. This Coxiella burnetii (strain Dugway 5J108-111) protein is Ribonuclease 3.